We begin with the raw amino-acid sequence, 924 residues long: TBC1 domain family member 2A (924 aa).

The segment at 1-38 (MEDTPERTPSSESIQPPGLAREPEVTSPGDSEGCARPL) is disordered. Residues 1–167 (MEDTPERTPS…TENGPTLHLK (167 aa)) are interaction with CADH1. The PH domain maps to 42 to 140 (PKKLCGYLSK…WLQQLQMKRW (99 aa)). The interval 228-296 (KQAQATAHGP…KRQSNTFPFF (69 aa)) is disordered. Basic and acidic residues predominate over residues 261–270 (IPEKEPEDPP). Positions 297–435 (SDGLARSRTA…KLTEDLAQPQ (139 aa)) are interaction with RAC1. 3 coiled-coil regions span residues 303-332 (SRTA…ELVI), 361-418 (LELV…AKQQ), and 444-477 (FLSQ…QVTK). A Rab-GAP TBC domain is found at 621–813 (GVPREHRPRV…RVWDAFLYEG (193 aa)). A coiled-coil region spans residues 871 to 906 (MKQLRQLRAAHRERLEAELRELELLKAEYLERRASR). S916 is modified (phosphoserine).

Interacts with activated RAC1 and CDH1.

The protein resides in the cytoplasm. Its subcellular location is the cytoplasmic vesicle. It is found in the cell junction. Its function is as follows. Acts as a GTPase-activating protein for RAB7A. Signal effector acting as a linker between RAC1 and RAB7A, leading to RAB7A inactivation and subsequent inhibition of cadherin degradation and reduced cell-cell adhesion. The protein is TBC1 domain family member 2A (Tbc1d2) of Rattus norvegicus (Rat).